The following is a 331-amino-acid chain: Bifunctional nuclease (331 aa).

In terms of domain architecture, BFN spans 126–261; that stretch reads CVQNNPRVLR…RIAYNNGLKV (136 aa). Residues 291-326 form the UVR domain; the sequence is EAQEFDLVRNMLVAAVEERYKDAAQYRDQLFMFRAK.

This sequence belongs to the bifunctional nuclease family.

Its subcellular location is the nucleus. Its function is as follows. Bifunctional nuclease with both RNase and DNase activities. Involved in basal defense response. Participates in abscisic acid-derived callose deposition following infection by a necrotrophic pathogen. The sequence is that of Bifunctional nuclease (BBD) from Oryza minuta.